The sequence spans 186 residues: Bilin biosynthesis protein CpeZ (186 aa).

Its function is as follows. Involved in the biosynthesis of bilin. This is Bilin biosynthesis protein CpeZ (cpeZ) from Synechococcus sp. (strain WH8020).